The following is a 416-amino-acid chain: MDAFNYRGGELFAEGVALSAIAERFGTPTYVYSRAHIEAQYRTFADALEGMPHLVCFAVKANSNLGVLNVLARLGAGFDIVSGGELERVLAAGGSADKIVFSGVGKTREDMRRALEVGVHCFNIESTDELGSRLQIVAAELGVRAPISLRVNPDVDAGTHPYISTGLKENKFGIAIADAEDVYVRAAQLPNLEVLGVDCHIGSQLTTLEPFIDALDRLLALVDRLGDCGIYLRHIDLGGGVGVRYRDEEPPLVADYIKAVRERLDGRDLALMFEPGRYIVANAGVLLTQVEYLKHTEHKDFAIVDAAMNDLIRPALYQAWMDVTAVRPRDTAARSYDIVGPICETGDFLAKGRELALEEGDLLAVHSAGAYGFVMSSNYNTRGRCAEVLVDGDQAFEVRRRETVAELFAGESLLPE.

Lysine 60 bears the N6-(pyridoxal phosphate)lysine mark. Pyridoxal 5'-phosphate is bound by residues glycine 240 and 274-277 (EPGR). Substrate contacts are provided by arginine 277, arginine 313, and tyrosine 317. The active-site Proton donor is cysteine 343. Substrate is bound by residues glutamate 344 and tyrosine 371. Tyrosine 371 contributes to the pyridoxal 5'-phosphate binding site.

It belongs to the Orn/Lys/Arg decarboxylase class-II family. LysA subfamily. As to quaternary structure, homodimer. It depends on pyridoxal 5'-phosphate as a cofactor.

It catalyses the reaction meso-2,6-diaminopimelate + H(+) = L-lysine + CO2. The protein operates within amino-acid biosynthesis; L-lysine biosynthesis via DAP pathway; L-lysine from DL-2,6-diaminopimelate: step 1/1. Specifically catalyzes the decarboxylation of meso-diaminopimelate (meso-DAP) to L-lysine. The sequence is that of Diaminopimelate decarboxylase from Pseudomonas fluorescens.